A 295-amino-acid chain; its full sequence is Acetylglutamate kinase (295 aa).

Residues 64 to 65 (GG), R86, and N190 contribute to the substrate site.

The protein belongs to the acetylglutamate kinase family. ArgB subfamily.

The protein localises to the cytoplasm. The enzyme catalyses N-acetyl-L-glutamate + ATP = N-acetyl-L-glutamyl 5-phosphate + ADP. The protein operates within amino-acid biosynthesis; L-arginine biosynthesis; N(2)-acetyl-L-ornithine from L-glutamate: step 2/4. Its function is as follows. Catalyzes the ATP-dependent phosphorylation of N-acetyl-L-glutamate. The polypeptide is Acetylglutamate kinase (Oleidesulfovibrio alaskensis (strain ATCC BAA-1058 / DSM 17464 / G20) (Desulfovibrio alaskensis)).